Consider the following 360-residue polypeptide: Peptide chain release factor 1 (360 aa).

N5-methylglutamine is present on Gln-237.

This sequence belongs to the prokaryotic/mitochondrial release factor family. Post-translationally, methylated by PrmC. Methylation increases the termination efficiency of RF1.

It localises to the cytoplasm. Functionally, peptide chain release factor 1 directs the termination of translation in response to the peptide chain termination codons UAG and UAA. The chain is Peptide chain release factor 1 from Teredinibacter turnerae (strain ATCC 39867 / T7901).